Here is a 60-residue protein sequence, read N- to C-terminus: Large ribosomal subunit protein bL32 (60 aa).

It belongs to the bacterial ribosomal protein bL32 family.

The polypeptide is Large ribosomal subunit protein bL32 (Thermosipho africanus (strain TCF52B)).